Reading from the N-terminus, the 102-residue chain is Small ribosomal subunit protein uS10 (102 aa).

It belongs to the universal ribosomal protein uS10 family. In terms of assembly, part of the 30S ribosomal subunit.

Functionally, involved in the binding of tRNA to the ribosomes. The polypeptide is Small ribosomal subunit protein uS10 (Pelotomaculum thermopropionicum (strain DSM 13744 / JCM 10971 / SI)).